Consider the following 203-residue polypeptide: E3 ubiquitin-protein ligase rnf152-B (203 aa).

Residues Cys12–Arg55 form an RING-type zinc finger. A helical membrane pass occupies residues Ser167–Leu187.

The protein belongs to the RNF152 family.

The protein localises to the lysosome membrane. It catalyses the reaction S-ubiquitinyl-[E2 ubiquitin-conjugating enzyme]-L-cysteine + [acceptor protein]-L-lysine = [E2 ubiquitin-conjugating enzyme]-L-cysteine + N(6)-ubiquitinyl-[acceptor protein]-L-lysine.. Its pathway is protein modification; protein ubiquitination. Its function is as follows. E3 ubiquitin-protein ligase that acts as a negative regulator of mTORC1 signaling by mediating ubiquitination of RagA/RRAGA and RHEB. Catalyzes 'Lys-63'-linked polyubiquitination of RagA/RRAGA in response to amino acid starvation, thereby regulating mTORC1 signaling. Also mediates monoubiquitination of RHEB, promoting its association with the TSC-TBC complex and subsequent inhibition. Also mediates 'Lys-48'-linked polyubiquitination of target proteins and their subsequent targeting to the proteasome for degradation. In Xenopus laevis (African clawed frog), this protein is E3 ubiquitin-protein ligase rnf152-B.